Reading from the N-terminus, the 276-residue chain is Tryptophan synthase alpha chain (276 aa).

Catalysis depends on proton acceptor residues Glu55 and Asp66.

It belongs to the TrpA family. As to quaternary structure, tetramer of two alpha and two beta chains.

It catalyses the reaction (1S,2R)-1-C-(indol-3-yl)glycerol 3-phosphate + L-serine = D-glyceraldehyde 3-phosphate + L-tryptophan + H2O. Its pathway is amino-acid biosynthesis; L-tryptophan biosynthesis; L-tryptophan from chorismate: step 5/5. Its function is as follows. The alpha subunit is responsible for the aldol cleavage of indoleglycerol phosphate to indole and glyceraldehyde 3-phosphate. The sequence is that of Tryptophan synthase alpha chain from Gloeobacter violaceus (strain ATCC 29082 / PCC 7421).